A 527-amino-acid chain; its full sequence is Peptide chain release factor 3 (527 aa).

The tr-type G domain maps to N9 to Q278. Residues S18–T25, D86–H90, and N140–D143 each bind GTP.

Belongs to the TRAFAC class translation factor GTPase superfamily. Classic translation factor GTPase family. PrfC subfamily.

Its subcellular location is the cytoplasm. Its function is as follows. Increases the formation of ribosomal termination complexes and stimulates activities of RF-1 and RF-2. It binds guanine nucleotides and has strong preference for UGA stop codons. It may interact directly with the ribosome. The stimulation of RF-1 and RF-2 is significantly reduced by GTP and GDP, but not by GMP. The chain is Peptide chain release factor 3 from Haemophilus influenzae (strain 86-028NP).